Reading from the N-terminus, the 469-residue chain is Putative dipeptidase SAB1611c (469 aa).

H84 contributes to the Zn(2+) binding site. D86 is an active-site residue. Residue D115 participates in Zn(2+) binding. The Proton acceptor role is filled by E149. 3 residues coordinate Zn(2+): E150, D173, and H440.

The protein belongs to the peptidase M20A family. The cofactor is Zn(2+).

The polypeptide is Putative dipeptidase SAB1611c (Staphylococcus aureus (strain bovine RF122 / ET3-1)).